Reading from the N-terminus, the 414-residue chain is ATP-dependent Clp protease ATP-binding subunit ClpX (414 aa).

The region spanning 1-51 (MADSKTKKKCSFCGRSENEVGFLITGMNGYICDSCATQAYEITQEALGEGR) is the ClpX-type ZB domain. Positions 10, 13, 32, and 35 each coordinate Zn(2+). 120 to 127 (STGTGKTL) contacts ATP.

It belongs to the ClpX chaperone family. Component of the ClpX-ClpP complex. Forms a hexameric ring that, in the presence of ATP, binds to fourteen ClpP subunits assembled into a disk-like structure with a central cavity, resembling the structure of eukaryotic proteasomes.

In terms of biological role, ATP-dependent specificity component of the Clp protease. It directs the protease to specific substrates. Can perform chaperone functions in the absence of ClpP. In Bacteroides thetaiotaomicron (strain ATCC 29148 / DSM 2079 / JCM 5827 / CCUG 10774 / NCTC 10582 / VPI-5482 / E50), this protein is ATP-dependent Clp protease ATP-binding subunit ClpX.